Here is a 330-residue protein sequence, read N- to C-terminus: Aspartate--ammonia ligase (330 aa).

This sequence belongs to the class-II aminoacyl-tRNA synthetase family. AsnA subfamily.

The protein localises to the cytoplasm. The catalysed reaction is L-aspartate + NH4(+) + ATP = L-asparagine + AMP + diphosphate + H(+). It functions in the pathway amino-acid biosynthesis; L-asparagine biosynthesis; L-asparagine from L-aspartate (ammonia route): step 1/1. This Haemophilus influenzae (strain 86-028NP) protein is Aspartate--ammonia ligase.